Consider the following 194-residue polypeptide: Peptidyl-tRNA hydrolase (194 aa).

Residue Tyr17 participates in tRNA binding. The active-site Proton acceptor is the His22. The tRNA site is built by Tyr68, Asn70, and Asn116.

The protein belongs to the PTH family. Monomer.

The protein resides in the cytoplasm. The catalysed reaction is an N-acyl-L-alpha-aminoacyl-tRNA + H2O = an N-acyl-L-amino acid + a tRNA + H(+). Functionally, hydrolyzes ribosome-free peptidyl-tRNAs (with 1 or more amino acids incorporated), which drop off the ribosome during protein synthesis, or as a result of ribosome stalling. In terms of biological role, catalyzes the release of premature peptidyl moieties from peptidyl-tRNA molecules trapped in stalled 50S ribosomal subunits, and thus maintains levels of free tRNAs and 50S ribosomes. The sequence is that of Peptidyl-tRNA hydrolase from Pseudomonas putida (strain GB-1).